The following is a 319-amino-acid chain: Acetyl-coenzyme A carboxylase carboxyl transferase subunit alpha (319 aa).

A CoA carboxyltransferase C-terminal domain is found at Glu-31–Glu-292.

Belongs to the AccA family. In terms of assembly, acetyl-CoA carboxylase is a heterohexamer composed of biotin carboxyl carrier protein (AccB), biotin carboxylase (AccC) and two subunits each of ACCase subunit alpha (AccA) and ACCase subunit beta (AccD).

The protein resides in the cytoplasm. It catalyses the reaction N(6)-carboxybiotinyl-L-lysyl-[protein] + acetyl-CoA = N(6)-biotinyl-L-lysyl-[protein] + malonyl-CoA. Its pathway is lipid metabolism; malonyl-CoA biosynthesis; malonyl-CoA from acetyl-CoA: step 1/1. In terms of biological role, component of the acetyl coenzyme A carboxylase (ACC) complex. First, biotin carboxylase catalyzes the carboxylation of biotin on its carrier protein (BCCP) and then the CO(2) group is transferred by the carboxyltransferase to acetyl-CoA to form malonyl-CoA. The chain is Acetyl-coenzyme A carboxylase carboxyl transferase subunit alpha from Rhodopirellula baltica (strain DSM 10527 / NCIMB 13988 / SH1).